The chain runs to 86 residues: YcgL domain-containing protein IL1825 (86 aa).

Residues 1–85 (MLCDVYRSSK…KREELQVNVN (85 aa)) form the YcgL domain.

The polypeptide is YcgL domain-containing protein IL1825 (Idiomarina loihiensis (strain ATCC BAA-735 / DSM 15497 / L2-TR)).